We begin with the raw amino-acid sequence, 503 residues long: UDP-N-acetylmuramoylalanine--D-glutamate ligase (503 aa).

129–135 is a binding site for ATP; it reads GTNGKTT. The segment at 284 to 305 is disordered; sequence DSEAEGEGKPRRRKADATAQEA.

It belongs to the MurCDEF family.

Its subcellular location is the cytoplasm. The enzyme catalyses UDP-N-acetyl-alpha-D-muramoyl-L-alanine + D-glutamate + ATP = UDP-N-acetyl-alpha-D-muramoyl-L-alanyl-D-glutamate + ADP + phosphate + H(+). It functions in the pathway cell wall biogenesis; peptidoglycan biosynthesis. Its function is as follows. Cell wall formation. Catalyzes the addition of glutamate to the nucleotide precursor UDP-N-acetylmuramoyl-L-alanine (UMA). The chain is UDP-N-acetylmuramoylalanine--D-glutamate ligase from Cupriavidus pinatubonensis (strain JMP 134 / LMG 1197) (Cupriavidus necator (strain JMP 134)).